The primary structure comprises 2155 residues: Conidial pigment polyketide synthase PfmaE (2155 aa).

An N-terminal acylcarrier protein transacylase domain (SAT) region spans residues 8–245; it reads LLFGDQSLDT…TAIPVYGPYH (238 aa). One can recognise a Ketosynthase family 3 (KS3) domain in the interval 381–813; it reads KCKLAIVGMA…GGNTGLLLED (433 aa). Catalysis depends on for beta-ketoacyl synthase activity residues C553, H688, and H731. A malonyl-CoA:ACP transacylase (MAT) domain region spans residues 910-1231; the sequence is AFMFTGQGSH…LCTLHSAGLN (322 aa). The active-site For acyl/malonyl transferase activity is the S1001. Residues 1293-1608 form a product template (PT) domain region; it reads TTTVQKVVRE…PRKVLNVVLP (316 aa). Residues 1297 to 1428 are N-terminal hotdog fold; it reads QKVVREEVKG…CKVFFGDNEE (132 aa). The region spanning 1297 to 1604 is the PKS/mFAS DH domain; sequence QKVVREEVKG…FQAIPRKVLN (308 aa). The active-site Proton acceptor; for dehydratase activity is the H1329. The interval 1455–1604 is C-terminal hotdog fold; sequence DASKIGRGLA…FQAIPRKVLN (150 aa). Residue D1516 is the Proton donor; for dehydratase activity of the active site. 2 Carrier domains span residues 1653–1730 and 1779–1856; these read LTKN…AQFE and GNVS…GIED. S1690 is subject to O-(pantetheine 4'-phosphoryl)serine. A disordered region spans residues 1738–1782; the sequence is EENAHSSASSDSADMETESNFTTPSDDSEKDEVKGDAPAADGNVS. Residue S1816 is modified to O-(pantetheine 4'-phosphoryl)serine. The disordered stretch occupies residues 1855 to 1892; that stretch reads EDKPKRAAPKSAKQEPAKPEPKVQGEAKAHTNPVDNYP. Residues 1866-1883 show a composition bias toward basic and acidic residues; the sequence is AKQEPAKPEPKVQGEAKA. The interval 1911-2041 is thioesterase (TE) domain; that stretch reads QLFMIPDGSG…LGEGDDAEAK (131 aa).

It participates in pigment biosynthesis; melanin biosynthesis. Non-reducing polyketide synthase; part of the gene cluster that mediates the biosynthesis of dihydroxynaphthalene (DHN)-melanin, a bluish-green pigment forming a dark layer in the conidial wall that protects the conidia from UV radiations. The first step of the pathway is the production of the pentaketide 1,3,6,8-tetrahydroxynaphthalene (1,3,6,8-THN or T4HN) by the polyketide synthase PfmaE though condensation of acetyl-CoA with malonyl-CoA. T4HN is not stable and easily oxidizes into the stable form flaviolin. T4HN is also substrate of the hydroxynaphthalene reductase PfmaG to yield scytalone. The scytalone dehydratase PfmaJ then reduces scytalone to 1,3,8-THN. 1,3,8-THN is then substrate of the hydroxynaphthalene reductase PfmaI to yield vermelone. Vermelone is further converted by the multicopper oxidase PfmaD to 1,8-DHN. Finally the laccase PFICI_06862 transforms 1,8-DHN to DHN-melanin. The roles of the 5-oxoprolinase PfmaA and the proline iminopeptidase PfmaB within the cluster have not been elucidated yet. The polypeptide is Conidial pigment polyketide synthase PfmaE (Pestalotiopsis fici (strain W106-1 / CGMCC3.15140)).